Reading from the N-terminus, the 174-residue chain is Protein PopB (174 aa).

The disordered stretch occupies residues 1-174 (MSHSKIKAGG…EAMKIKDDDD (174 aa)). Polar residues predominate over residues 50–65 (LNKSNLGSDSQTWTPG). Over residues 66-78 (STMVSLKSRSSSS) the composition is skewed to low complexity. Basic and acidic residues predominate over residues 79-89 (HKPDTGGDTKP). Low complexity predominate over residues 147–161 (IALQRAIQRQTQTRQ). Residues 162 to 174 (KMQEAMKIKDDDD) are compositionally biased toward basic and acidic residues.

It is found in the secreted. Its function is as follows. Probably involved in host-pathogen interactions. The sequence is that of Protein PopB (popB) from Ralstonia nicotianae (strain ATCC BAA-1114 / GMI1000) (Ralstonia solanacearum).